Reading from the N-terminus, the 365-residue chain is Zinc finger TRAF-type-containing protein 1-B (365 aa).

Residues 1–56 (MSEEREAPGPLASSSAGLGAEVGQEEVPGGAGPARLLLLPSDSDGPPKKRLRSEAE) form a disordered region. Residues 72–117 (CAVCLDLPKASVYQCTNGHLMCAGCFIHLLADARLKEEQATCPNCR) form an RING-type; degenerate zinc finger. Residues 113-186 (CPNCRCEISK…PWQGPYHELT (74 aa)) form a TRAF-type zinc finger.

Belongs to the ZFTRAF1 family. As to quaternary structure, interacts with LGALS3.

It is found in the cytoplasm. The sequence is that of Zinc finger TRAF-type-containing protein 1-B from Xenopus laevis (African clawed frog).